Reading from the N-terminus, the 115-residue chain is Small polypeptide DEVIL 13 (115 aa).

Positions Met1 to Thr12 are enriched in basic and acidic residues. The disordered stretch occupies residues Met1–Ala89. The span at Thr13–Ser65 shows a compositional bias: low complexity. The helical transmembrane segment at Ser44–Ser63 threads the bilayer. Positions Ser80–Lys111 are required for DVL/RTFL small polypeptide activity.

This sequence belongs to the DVL/RTFL small polypeptides family.

It is found in the cell membrane. Small polypeptide acting as a regulatory molecule which coordinates cellular responses required for differentiation, growth and development, probably by restricting polar cell proliferation in lateral organs and coordinating socket cell recruitment and differentiation at trichome sites. This is Small polypeptide DEVIL 13 from Arabidopsis thaliana (Mouse-ear cress).